The sequence spans 517 residues: Nucleoside transporter FUN26 (517 aa).

The tract at residues 1-63 (MSTSADTDTI…EREQSVSTEP (63 aa)) is disordered. Basic and acidic residues predominate over residues 25 to 44 (THSEEISRSGEEHESENNEH). A phosphoserine mark is found at S45 and S58. A run of 11 helical transmembrane segments spans residues 76–96 (LSYI…NCIL), 116–136 (IFTS…NIYL), 151–171 (LVWE…HFLL), 174–194 (WFNF…TAMT), 214–234 (MVGQ…LAFI), 243–263 (GGIL…VVMF), 344–364 (LVLS…FASA), 367–387 (VTGL…LWNL), 411–431 (TFIY…FTAI), 446–466 (IVDL…GHVI), and 492–512 (IFVS…VFII).

It belongs to the SLC29A/ENT transporter (TC 2.A.57) family.

The protein localises to the membrane. Its function is as follows. Has broad nucleoside selectivity (uridine, adenosine and cytidine) and most likely functions to transport nucleosides across intracellular membranes. This Saccharomyces cerevisiae (strain ATCC 204508 / S288c) (Baker's yeast) protein is Nucleoside transporter FUN26 (FUN26).